A 284-amino-acid chain; its full sequence is MSLNFPLLLVIAVAVCGLLALLDLVFFAPRRRSAIASYQGSVSQPDAVVIEKLNKEPLLVEYGKSFFPVLFIVLVLRSFLVEPFQIPSGSMKPTLDVGDFILVNKFSYGIRLPVIDKKVIEVGDPQRGDVMVFRYPSDPNVNYIKRVVGLPGDVVRYTSDKRLFINGESVAEKLLGAEPNTLGSAELYQEKLGAVEHEIRKEMSRYRAMPDGQWKVPAGHYFMMGDNRDNSNDSRYWDDPNIPKDLLGMVPDENIVGKAFAVWMSWPEPKLSHLPNFSRVGLIK.

The helical transmembrane segment at 4 to 22 threads the bilayer; the sequence is NFPLLLVIAVAVCGLLALL. Over 23 to 58 the chain is Cytoplasmic; that stretch reads DLVFFAPRRRSAIASYQGSVSQPDAVVIEKLNKEPL. Residues 59-77 traverse the membrane as a helical segment; that stretch reads LVEYGKSFFPVLFIVLVLR. Residues 78 to 284 are Periplasmic-facing; it reads SFLVEPFQIP…PNFSRVGLIK (207 aa). Active-site residues include serine 90 and lysine 145.

The protein belongs to the peptidase S26 family.

It is found in the cell inner membrane. It carries out the reaction Cleavage of hydrophobic, N-terminal signal or leader sequences from secreted and periplasmic proteins.. The sequence is that of Signal peptidase I (lepB) from Pseudomonas fluorescens.